The sequence spans 485 residues: Aspartyl/glutamyl-tRNA(Asn/Gln) amidotransferase subunit B (485 aa).

The protein belongs to the GatB/GatE family. GatB subfamily. In terms of assembly, heterotrimer of A, B and C subunits.

The catalysed reaction is L-glutamyl-tRNA(Gln) + L-glutamine + ATP + H2O = L-glutaminyl-tRNA(Gln) + L-glutamate + ADP + phosphate + H(+). It carries out the reaction L-aspartyl-tRNA(Asn) + L-glutamine + ATP + H2O = L-asparaginyl-tRNA(Asn) + L-glutamate + ADP + phosphate + 2 H(+). In terms of biological role, allows the formation of correctly charged Asn-tRNA(Asn) or Gln-tRNA(Gln) through the transamidation of misacylated Asp-tRNA(Asn) or Glu-tRNA(Gln) in organisms which lack either or both of asparaginyl-tRNA or glutaminyl-tRNA synthetases. The reaction takes place in the presence of glutamine and ATP through an activated phospho-Asp-tRNA(Asn) or phospho-Glu-tRNA(Gln). This Borrelia turicatae (strain 91E135) protein is Aspartyl/glutamyl-tRNA(Asn/Gln) amidotransferase subunit B.